A 279-amino-acid chain; its full sequence is 4-diphosphocytidyl-2-C-methyl-D-erythritol kinase (279 aa).

Lysine 9 is a catalytic residue. 92–102 (PLAAGLGGGSS) contributes to the ATP binding site. Residue aspartate 134 is part of the active site.

The protein belongs to the GHMP kinase family. IspE subfamily.

The catalysed reaction is 4-CDP-2-C-methyl-D-erythritol + ATP = 4-CDP-2-C-methyl-D-erythritol 2-phosphate + ADP + H(+). The protein operates within isoprenoid biosynthesis; isopentenyl diphosphate biosynthesis via DXP pathway; isopentenyl diphosphate from 1-deoxy-D-xylulose 5-phosphate: step 3/6. Its function is as follows. Catalyzes the phosphorylation of the position 2 hydroxy group of 4-diphosphocytidyl-2C-methyl-D-erythritol. This is 4-diphosphocytidyl-2-C-methyl-D-erythritol kinase from Syntrophus aciditrophicus (strain SB).